The sequence spans 401 residues: Probable inactive purple acid phosphatase 14 (401 aa).

Residues 1–30 form the signal peptide; sequence MEETRRRFVISSVLSVSLIYLCLSTCHVSA. Residue asparagine 79 is glycosylated (N-linked (GlcNAc...) asparagine). Asparagine 197 contributes to the substrate binding site. Residue asparagine 197 participates in Zn(2+) binding. The N-linked (GlcNAc...) asparagine glycan is linked to asparagine 246. Histidine 256 is a binding site for Zn(2+). A glycan (N-linked (GlcNAc...) asparagine) is linked at asparagine 266. Histidine 305 provides a ligand contact to Zn(2+). A substrate-binding site is contributed by 305-307; it reads HDH. Histidine 307 serves as a coordination point for Fe cation. N-linked (GlcNAc...) asparagine glycans are attached at residues asparagine 371 and asparagine 384.

This sequence belongs to the metallophosphoesterase superfamily. Purple acid phosphatase family. As to quaternary structure, homodimer. It depends on Fe cation as a cofactor. Requires Zn(2+) as cofactor. Specifically expressed in flowers.

Its subcellular location is the secreted. The sequence is that of Probable inactive purple acid phosphatase 14 (PAP14) from Arabidopsis thaliana (Mouse-ear cress).